We begin with the raw amino-acid sequence, 391 residues long: Esterase (391 aa).

An N-terminal signal peptide occupies residues 1-26 (MEFPETNNNPIITLSFLLCMLSLAYA). Ser-41 functions as the Nucleophile in the catalytic mechanism. N-linked (GlcNAc...) asparagine glycosylation is found at Asn-186, Asn-193, and Asn-313. Catalysis depends on residues Asp-347 and His-350.

The protein belongs to the 'GDSL' lipolytic enzyme family. The N-terminus is blocked. In terms of processing, glycosylated.

Has lipase and esterase activities. May be involved in plant defense. This is Esterase from Hevea brasiliensis (Para rubber tree).